The following is a 343-amino-acid chain: Methionine import ATP-binding protein MetN 1 (343 aa).

The ABC transporter domain occupies 2–241 (IKLTHISKVF…PKTPLAQQFI (240 aa)). Position 38-45 (38-45 (GASGAGKS)) interacts with ATP.

This sequence belongs to the ABC transporter superfamily. Methionine importer (TC 3.A.1.24) family. In terms of assembly, the complex is composed of two ATP-binding proteins (MetN), two transmembrane proteins (MetI) and a solute-binding protein (MetQ).

The protein localises to the cell inner membrane. It carries out the reaction L-methionine(out) + ATP + H2O = L-methionine(in) + ADP + phosphate + H(+). The catalysed reaction is D-methionine(out) + ATP + H2O = D-methionine(in) + ADP + phosphate + H(+). In terms of biological role, part of the ABC transporter complex MetNIQ involved in methionine import. Responsible for energy coupling to the transport system. The protein is Methionine import ATP-binding protein MetN 1 of Yersinia pestis bv. Antiqua (strain Antiqua).